The primary structure comprises 223 residues: Ribosomal RNA small subunit methyltransferase G (223 aa).

Residues Gly-83, Leu-88, 134 to 135 (AE), and Arg-152 contribute to the S-adenosyl-L-methionine site.

It belongs to the methyltransferase superfamily. RNA methyltransferase RsmG family.

It localises to the cytoplasm. Specifically methylates the N7 position of guanine in position 518 of 16S rRNA. This is Ribosomal RNA small subunit methyltransferase G from Corynebacterium diphtheriae (strain ATCC 700971 / NCTC 13129 / Biotype gravis).